Consider the following 360-residue polypeptide: Photosystem II protein D1 2 (360 aa).

Over 1–31 (MTTTLQQRESASLWEQFCQWVTSTNNRIYVG) the chain is Cytoplasmic. A helical transmembrane segment spans residues 32-53 (WFGTLMIPTLLTATTCFIIAFI). The Lumenal, thylakoid segment spans residues 54–110 (AAPPVDIDGIREPVAGSLLYGNNIISGAVVPSSNAIGLHFYPIWEAASLDEWLYNGG). Residues 111-134 (PYQLVVFHFLIGIFCYMGRQWELS) traverse the membrane as a helical segment. Chlorophyll a is bound at residue histidine 118. Tyrosine 126 lines the pheophytin a pocket. The Cytoplasmic segment spans residues 135–142 (YRLGMRPW). The helical transmembrane segment at 143-161 (ICVAYSAPVSAATAVFLIY) threads the bilayer. Tyrosine 147 lines the pheophytin a pocket. The Lumenal, thylakoid segment spans residues 162 to 191 (PIGQGSFSDGMPLGISGTFNFMIVFQAEHN). [CaMn4O5] cluster-binding residues include aspartate 170 and glutamate 189. The chain crosses the membrane as a helical span at residues 192–218 (ILMHPFHMLGVAGVFGGSLFSAMHGSL). Histidine 198 is a chlorophyll a binding site. The a quinone site is built by histidine 215, serine 264, and phenylalanine 265. Histidine 215 serves as a coordination point for Fe cation. Residues 219-270 (VTSSLVRETTEVESQNYGYKFGQEEETYNIVAAHGYFGRLIFQYASFNNSRS) are Cytoplasmic-facing. A helical membrane pass occupies residues 271–295 (LHFFLGAWPVIGIWFTAMGVSTMAF). Histidine 272 is a Fe cation binding site. Residues 296–360 (NLNGFNFNQS…VALTAPAVNG (65 aa)) lie on the Lumenal, thylakoid side of the membrane. [CaMn4O5] cluster-binding residues include histidine 332, glutamate 333, histidine 337, aspartate 342, and alanine 344. A propeptide spanning residues 345-360 (SGEQAPVALTAPAVNG) is cleaved from the precursor.

The protein belongs to the reaction center PufL/M/PsbA/D family. PSII is composed of 1 copy each of membrane proteins PsbA, PsbB, PsbC, PsbD, PsbE, PsbF, PsbH, PsbI, PsbJ, PsbK, PsbL, PsbM, PsbT, PsbX, PsbY, PsbZ, Psb30/Ycf12, peripheral proteins PsbO, CyanoQ (PsbQ), PsbU, PsbV and a large number of cofactors. It forms dimeric complexes. The cofactor is The D1/D2 heterodimer binds P680, chlorophylls that are the primary electron donor of PSII, and subsequent electron acceptors. It shares a non-heme iron and each subunit binds pheophytin, quinone, additional chlorophylls, carotenoids and lipids. D1 provides most of the ligands for the Mn4-Ca-O5 cluster of the oxygen-evolving complex (OEC). There is also a Cl(-1) ion associated with D1 and D2, which is required for oxygen evolution. The PSII complex binds additional chlorophylls, carotenoids and specific lipids.. C-terminally processed by CtpA; processing is essential to allow assembly of the oxygen-evolving complex and photosynthetic growth. In terms of processing, tyr-161 forms a radical intermediate that is referred to as redox-active TyrZ, YZ or Y-Z.

It localises to the cellular thylakoid membrane. It carries out the reaction 2 a plastoquinone + 4 hnu + 2 H2O = 2 a plastoquinol + O2. Photosystem II (PSII) is a light-driven water:plastoquinone oxidoreductase that uses light energy to abstract electrons from H(2)O, generating O(2) and a proton gradient subsequently used for ATP formation. It consists of a core antenna complex that captures photons, and an electron transfer chain that converts photonic excitation into a charge separation. The D1/D2 (PsbA/PsbD) reaction center heterodimer binds P680, the primary electron donor of PSII as well as several subsequent electron acceptors. This Synechocystis sp. (strain ATCC 27184 / PCC 6803 / Kazusa) protein is Photosystem II protein D1 2.